A 338-amino-acid polypeptide reads, in one-letter code: Ketol-acid reductoisomerase (NADP(+)) (338 aa).

In terms of domain architecture, KARI N-terminal Rossmann spans 1–181; that stretch reads MKVFYDKDCD…GGGRAGIIET (181 aa). NADP(+)-binding positions include 24-27, Arg47, and Ser52; that span reads YGSQ. His107 is an active-site residue. Residue Gly133 coordinates NADP(+). A KARI C-terminal knotted domain is found at 182 to 327; that stretch reads NFREETETDL…AKLRAMMPWI (146 aa). Asp190, Glu194, Glu226, and Glu230 together coordinate Mg(2+). Ser251 is a binding site for substrate.

It belongs to the ketol-acid reductoisomerase family. The cofactor is Mg(2+).

The enzyme catalyses (2R)-2,3-dihydroxy-3-methylbutanoate + NADP(+) = (2S)-2-acetolactate + NADPH + H(+). It carries out the reaction (2R,3R)-2,3-dihydroxy-3-methylpentanoate + NADP(+) = (S)-2-ethyl-2-hydroxy-3-oxobutanoate + NADPH + H(+). It participates in amino-acid biosynthesis; L-isoleucine biosynthesis; L-isoleucine from 2-oxobutanoate: step 2/4. The protein operates within amino-acid biosynthesis; L-valine biosynthesis; L-valine from pyruvate: step 2/4. Its function is as follows. Involved in the biosynthesis of branched-chain amino acids (BCAA). Catalyzes an alkyl-migration followed by a ketol-acid reduction of (S)-2-acetolactate (S2AL) to yield (R)-2,3-dihydroxy-isovalerate. In the isomerase reaction, S2AL is rearranged via a Mg-dependent methyl migration to produce 3-hydroxy-3-methyl-2-ketobutyrate (HMKB). In the reductase reaction, this 2-ketoacid undergoes a metal-dependent reduction by NADPH to yield (R)-2,3-dihydroxy-isovalerate. The chain is Ketol-acid reductoisomerase (NADP(+)) from Herminiimonas arsenicoxydans.